The sequence spans 122 residues: Large ribosomal subunit protein uL14 (122 aa).

The protein belongs to the universal ribosomal protein uL14 family. As to quaternary structure, part of the 50S ribosomal subunit. Forms a cluster with proteins L3 and L19. In the 70S ribosome, L14 and L19 interact and together make contacts with the 16S rRNA in bridges B5 and B8.

Functionally, binds to 23S rRNA. Forms part of two intersubunit bridges in the 70S ribosome. The polypeptide is Large ribosomal subunit protein uL14 (Caulobacter vibrioides (strain ATCC 19089 / CIP 103742 / CB 15) (Caulobacter crescentus)).